We begin with the raw amino-acid sequence, 410 residues long: F-box/WD repeat-containing protein 4 (410 aa).

The F-box domain occupies 23-69 (GPALWRLPEELLLLICSYLDTRALGRLAQVCRWLRRFTSCDLLWRPI). WD repeat units lie at residues 159–196 (GHDE…TVKY), 198–235 (AHEQ…LGQC), 289–327 (PPGA…RKCV), and 333–372 (PHDS…CLHA).

In terms of assembly, part of a SCF (SKP1-cullin-F-box) protein ligase complex. Interacts with POUF51.

Probably recognizes and binds to some phosphorylated proteins and promotes their ubiquitination and degradation. Likely to be involved in key signaling pathways crucial for normal limb development. May participate in Wnt signaling. The sequence is that of F-box/WD repeat-containing protein 4 (Fbxw4) from Mus musculus (Mouse).